A 262-amino-acid polypeptide reads, in one-letter code: Hydroxyethylthiazole kinase (262 aa).

Met50 is a substrate binding site. ATP-binding residues include Arg125 and Thr171. Gly198 is a substrate binding site.

Belongs to the Thz kinase family. Mg(2+) serves as cofactor.

The enzyme catalyses 5-(2-hydroxyethyl)-4-methylthiazole + ATP = 4-methyl-5-(2-phosphooxyethyl)-thiazole + ADP + H(+). Its pathway is cofactor biosynthesis; thiamine diphosphate biosynthesis; 4-methyl-5-(2-phosphoethyl)-thiazole from 5-(2-hydroxyethyl)-4-methylthiazole: step 1/1. Its function is as follows. Catalyzes the phosphorylation of the hydroxyl group of 4-methyl-5-beta-hydroxyethylthiazole (THZ). The polypeptide is Hydroxyethylthiazole kinase (Citrobacter koseri (strain ATCC BAA-895 / CDC 4225-83 / SGSC4696)).